The chain runs to 712 residues: Translation initiation factor eIF2B subunit epsilon (712 aa).

Residues 1 to 20 (MAGKKGQKKSGLGNHGKNSD) form a disordered region. A phosphoserine mark is found at S478, S481, S507, S525, S538, and S707. Residues 539–710 (EFEDEDFEKE…QNADEESSSE (172 aa)) form the W2 domain.

Belongs to the eIF-2B gamma/epsilon subunits family. As to quaternary structure, component of the translation initiation factor 2B (eIF2B) complex which is a heterodecamer of two sets of five different subunits: alpha, beta, gamma, delta and epsilon. Subunits alpha, beta and delta comprise a regulatory subcomplex and subunits epsilon and gamma comprise a catalytic subcomplex. Within the complex, the hexameric regulatory complex resides at the center, with the two heterodimeric catalytic subcomplexes bound on opposite sides.

Its subcellular location is the cytoplasm. The protein localises to the cytosol. Functionally, acts as a catalytic component of the translation initiation factor 2B (eIF2B) complex, which catalyzes the exchange of GDP for GTP on eukaryotic initiation factor 2 (eIF2) and is regulated by phosphorylated eIF2. Its guanine nucleotide exchange factor activity is repressed when bound to eIF2 complex phosphorylated on the alpha subunit, thereby limiting the amount of methionyl-initiator methionine tRNA available to the ribosome and consequently global translation is repressed. It activates the synthesis of GCN4 in yeast under amino acid starvation conditions by suppressing the inhibitory effects of multiple AUG codons present in the leader of GCN4 mRNA. It may promote either repression or activation of GCN4 expression depending on amino acid availability. GCD6 and GCD7 repress GCN4 expression at the translational level by ensuring that ribosomes which have translated UORF1 will reinitiate at UORF2, -3, or -4 and thus fail to reach the GCN4 start site. The chain is Translation initiation factor eIF2B subunit epsilon (GCD6) from Saccharomyces cerevisiae (strain ATCC 204508 / S288c) (Baker's yeast).